The sequence spans 657 residues: MRGCLQSVKWLTSALRPSQSLASSTRYPRRLLSTSAPRNAQVRKPASEVEQRIAAIPIERFRNFCIVAHVDHGKSTLSDRLLELTGTIEAGANKQVLDKLDVERERGITVKAQTCSMLYNHQGEDYLLHLVDTPGHVDFRAEVSRSYASCGGALLLVDASQGIQAQTVANFYLAFAEGLKLVPVINKVDLPSADPQRALDQMKNTFELDPESAVLVSAKTGLNVSQLLPTVIEQIPAPVGDRTKPLRMLLVDSWYSTYKGVILLVRLFDGEIRAGDQVVSFATGLKYTVGEVGIMYPGRTAQSVLRAGQVGYIYFNPAMKRSQEAKVGDTYTKVGSERLVQPLPGFEEPKAMVFVAAYPVDASDFPHLEDSINQLILNDRSVTLQKESSEALGAGFRLGFLGTLHCSVFEDRLRQEHGASIIITPPTVPFKVIWKDGKEEIITNPALFPEEDTLRAKVTELQEPFVLATLTFPEEYLGRVIELCESNRGEQKSLEFFTSTQVILKYELPLAQLVDDFFGKLKGSTKGYASLDYEESGWRRSNISKLQLLVNKVPVDAVSRVVHSSQVQRLGRLWVSKFKEHVDRQMFEVVIQAAAGRNVVARESIKPFRKDVLQKLHAADVTRRKKLLEKQKEGRKKLKAVGNVVIEHKAFQAFLAK.

A mitochondrion-targeting transit peptide spans Met1–Asn39. The tr-type G domain occupies Glu59–Val239. GTP contacts are provided by residues His121 to Leu128, Ile185 to Asp189, and Val239 to Arg242.

This sequence belongs to the TRAFAC class translation factor GTPase superfamily. Classic translation factor GTPase family. LepA subfamily.

The protein localises to the mitochondrion inner membrane. The catalysed reaction is GTP + H2O = GDP + phosphate + H(+). Promotes mitochondrial protein synthesis. May act as a fidelity factor of the translation reaction, by catalyzing a one-codon backward translocation of tRNAs on improperly translocated ribosomes. Binds to mitochondrial ribosomes in a GTP-dependent manner. In Ajellomyces capsulatus (strain H143) (Darling's disease fungus), this protein is Translation factor GUF1, mitochondrial.